The primary structure comprises 351 residues: UDP-3-O-acylglucosamine N-acyltransferase (351 aa).

His257 (proton acceptor) is an active-site residue.

This sequence belongs to the transferase hexapeptide repeat family. LpxD subfamily. In terms of assembly, homotrimer.

The catalysed reaction is a UDP-3-O-[(3R)-3-hydroxyacyl]-alpha-D-glucosamine + a (3R)-hydroxyacyl-[ACP] = a UDP-2-N,3-O-bis[(3R)-3-hydroxyacyl]-alpha-D-glucosamine + holo-[ACP] + H(+). The protein operates within bacterial outer membrane biogenesis; LPS lipid A biosynthesis. Catalyzes the N-acylation of UDP-3-O-acylglucosamine using 3-hydroxyacyl-ACP as the acyl donor. Is involved in the biosynthesis of lipid A, a phosphorylated glycolipid that anchors the lipopolysaccharide to the outer membrane of the cell. The chain is UDP-3-O-acylglucosamine N-acyltransferase from Methylorubrum extorquens (strain CM4 / NCIMB 13688) (Methylobacterium extorquens).